Here is a 656-residue protein sequence, read N- to C-terminus: NADH-ubiquinone oxidoreductase chain 5 (656 aa).

The next 17 membrane-spanning stretches (helical) occupy residues 4-21, 28-50, 81-103, 112-129, 133-155, 176-198, 208-230, 243-262, 272-294, 301-319, 329-351, 364-386, 409-431, 452-471, 514-536, 603-625, and 629-651; these read TLIILPLLGSIVSGFFGR, AHLITCVSVITTTFLAILAFFEV, LTVSMFITVLIVSSLVHIYSISY, RFFSYLSLFTFMMIILVT, YLIMFVGWEGVGVCSYLLVNFWF, TLLTVGMFAILWSFGNIDYSTVF, IITIIGICLLIGATAKSSQVGLH, VSALIHAATMVTAGVYLLMR, TVLVLCLWLGAITTVFSSLIGLF, VIAYSTMSQLGMMVIAVGL, LVNHAFYKALLFLGAGSVIHAVA, EFLPLTYSVMLIASLSLVAVPFM, IVYFVATIGAMFTTLYSAKVLYL, LFMTIPLIILAIFSIFFGYL, FVFTVSLSLLSVLLSEFLPKLLI, SLGNLSTGIVTTYALYILIGLIF, and LLYFSYNDNNLLILIIFTLFALL.

Belongs to the complex I subunit 5 family.

The protein localises to the mitochondrion inner membrane. The catalysed reaction is a ubiquinone + NADH + 5 H(+)(in) = a ubiquinol + NAD(+) + 4 H(+)(out). Core subunit of the mitochondrial membrane respiratory chain NADH dehydrogenase (Complex I) that is believed to belong to the minimal assembly required for catalysis. Complex I functions in the transfer of electrons from NADH to the respiratory chain. The immediate electron acceptor for the enzyme is believed to be ubiquinone. This chain is NADH-ubiquinone oxidoreductase chain 5 (nad5), found in Aspergillus niger.